Consider the following 25-residue polypeptide: Large ribosomal subunit protein uL30 (25 aa).

The protein belongs to the universal ribosomal protein uL30 family. Part of the 50S ribosomal subunit.

The protein is Large ribosomal subunit protein uL30 (rpmD) of Pseudomonas putida (Arthrobacter siderocapsulatus).